The sequence spans 619 residues: Telomere repeat-binding protein 3 (619 aa).

Residues Val-324–Pro-403 form the Ubiquitin-like domain. Positions Ala-504–Ser-563 constitute an HTH myb-type domain. Positions Trp-532–Val-559 form a DNA-binding region, H-T-H motif. A disordered region spans residues Gln-593–Val-619.

In terms of assembly, homodimer and heterodimer with TRP1. In terms of tissue distribution, expressed ubiquitously. Highest expression in flowers and roots.

It is found in the nucleus. Binds specifically to the plant telomeric double-stranded DNA sequences. At least 2 repeats of telomeric sequences are required for binding. Induces DNA bending. In Arabidopsis thaliana (Mouse-ear cress), this protein is Telomere repeat-binding protein 3 (TRP3).